Reading from the N-terminus, the 741-residue chain is Homeobox protein AHox1 (741 aa).

Disordered stretches follow at residues 1–30 (MEKMHSKSVSPVPFNNSNNTSLGGLRKSSS), 61–96 (KRRLLDPQNKKKQNRFERYSSSNHAQEQSSEENFCR), 146–183 (VNPLSKYFKPSSNDQLGARRTATSFSSSSEASDSKSCC), 203–226 (ADSDWSEDATGNEADDPDDHINQD), 357–383 (KTEESLRSPSETKQYSPDASTFYPIRT), 476–501 (FDFPPKFGSNNSSTDKPEQEDNNPQT), and 616–642 (QYGHMSSSQNPHSETQNRSEEVRGTVK). Positions 7 to 19 (KSVSPVPFNNSNN) are enriched in low complexity. Basic and acidic residues predominate over residues 63–78 (RLLDPQNKKKQNRFER). Residues 79 to 92 (YSSSNHAQEQSSEE) show a composition bias toward polar residues. A compositionally biased stretch (low complexity) spans 169–181 (SFSSSSEASDSKS). A compositionally biased stretch (polar residues) spans 363–375 (RSPSETKQYSPDA). Positions 616-629 (QYGHMSSSQNPHSE) are enriched in polar residues. Basic and acidic residues predominate over residues 630 to 639 (TQNRSEEVRG). The homeobox DNA-binding region spans 645 to 704 (RKWNRAVFSLMQRRGLEKSFQSQKYVAKPERRKLADALSLTDAQVKIWFQNRRMKWRQEI). Residues 722–741 (EIEKEKTQTPSDEGEVINVD) form a disordered region.

The protein belongs to the H2.0 homeobox family. Expressed in the tissues of endodermal origin.

Its subcellular location is the nucleus. This Halocynthia roretzi (Sea squirt) protein is Homeobox protein AHox1 (AHOX1).